The following is a 174-amino-acid chain: tRNA (cytidine(56)-2'-O)-methyltransferase (174 aa).

S-adenosyl-L-methionine-binding positions include Leu83, 108 to 112, and 126 to 133; these read GAEKV and VGNQPHSE.

This sequence belongs to the aTrm56 family. In terms of assembly, homodimer.

Its subcellular location is the cytoplasm. It catalyses the reaction cytidine(56) in tRNA + S-adenosyl-L-methionine = 2'-O-methylcytidine(56) in tRNA + S-adenosyl-L-homocysteine + H(+). Specifically catalyzes the AdoMet-dependent 2'-O-ribose methylation of cytidine at position 56 in tRNAs. The sequence is that of tRNA (cytidine(56)-2'-O)-methyltransferase from Methanothrix thermoacetophila (strain DSM 6194 / JCM 14653 / NBRC 101360 / PT) (Methanosaeta thermophila).